The primary structure comprises 516 residues: Gastrula zinc finger protein XlCGF53.1 (516 aa).

Disordered stretches follow at residues 1 to 33 and 200 to 220; these read MGMW…GKKE and GNQS…TDKP. A compositionally biased stretch (polar residues) spans 200-218; it reads GNQSDCSINPLTEQIQGTD. 7 C2H2-type zinc fingers span residues 312-334, 354-376, 382-404, 410-432, 438-460, 466-488, and 494-516; these read YICS…QKTH, FPCS…QSSH, YACS…LKLH, FPCS…RRVH, YSCS…QRTH, and FSCT…HRTH.

The protein belongs to the krueppel C2H2-type zinc-finger protein family.

It localises to the nucleus. Functionally, may be involved in transcriptional regulation. The protein is Gastrula zinc finger protein XlCGF53.1 of Xenopus laevis (African clawed frog).